Consider the following 280-residue polypeptide: L-proline cis-4-hydroxylase (280 aa).

Positions 106, 108, and 154 each coordinate Fe cation. Residue arginine 164 participates in 2-oxoglutarate binding.

Belongs to the L-proline cis-4-/cis-3-hydroxylase family. Fe(2+) serves as cofactor.

The enzyme catalyses L-proline + 2-oxoglutarate + O2 = cis-4-hydroxy-L-proline + succinate + CO2. With respect to regulation, inhibited by metal ions such as Co(2+), Zn(2+), Cu(2+) or Ni(2+). Is also inhibited by EDTA or diethylpyrocarbonate (DEPC) in vitro. Unlike the procollagen-proline cis-3- and trans-4-hydroxylases from mammals, does not necessarily require L-ascorbate for activity although it does increase the activity of the enzyme. Dioxygenase that catalyzes the 2-oxoglutarate-dependent selective hydroxylation of free L-proline to cis-4-hydroxy-L-proline (cis-4-Hyp). The polypeptide is L-proline cis-4-hydroxylase (Mesorhizobium japonicum (strain LMG 29417 / CECT 9101 / MAFF 303099) (Mesorhizobium loti (strain MAFF 303099))).